A 143-amino-acid chain; its full sequence is Nucleoside diphosphate kinase (143 aa).

ATP-binding residues include Lys-11, Phe-59, Arg-87, Thr-93, Arg-104, and Asn-114. His-117 serves as the catalytic Pros-phosphohistidine intermediate.

This sequence belongs to the NDK family. Homotetramer. Mg(2+) is required as a cofactor.

The protein resides in the cytoplasm. It catalyses the reaction a 2'-deoxyribonucleoside 5'-diphosphate + ATP = a 2'-deoxyribonucleoside 5'-triphosphate + ADP. It carries out the reaction a ribonucleoside 5'-diphosphate + ATP = a ribonucleoside 5'-triphosphate + ADP. Its function is as follows. Major role in the synthesis of nucleoside triphosphates other than ATP. The ATP gamma phosphate is transferred to the NDP beta phosphate via a ping-pong mechanism, using a phosphorylated active-site intermediate. This is Nucleoside diphosphate kinase from Shewanella halifaxensis (strain HAW-EB4).